We begin with the raw amino-acid sequence, 615 residues long: Matrix metalloproteinase-25 (615 aa).

Residues 1–162 constitute a propeptide that is removed on maturation; the sequence is MCFPGSQISP…AAGLVRRRRR (162 aa). The chain crosses the membrane as a helical span at residues 53–73; the sequence is ILRLPAFGLPLLALLLVPLLP. The Cysteine switch motif lies at 143–150; sequence PRCSLPDV. The Zn(2+) site is built by C145 and H287. E288 is a catalytic residue. The Zn(2+) site is built by H291 and H297. The segment at 336 to 366 is disordered; that stretch reads VSQNPNARPTRKPLVPPPQPPAMPPDSPATP. The segment covering 349-366 has biased composition (pro residues); that stretch reads LVPPPQPPAMPPDSPATP. Hemopexin repeat units lie at residues 368–417, 421–466, 467–515, and 516–562; these read PDRC…WEGL, VKVI…GLPP, GEDV…DGAP, and FAPD…WLDC. The cysteines at positions 371 and 562 are disulfide-linked. The disordered stretch occupies residues 547 to 582; that stretch reads AESDSPQPIGPKWLDCPAPNSDPRVTSPPKTTSKTR. Residue A593 is the site of GPI-anchor amidated alanine attachment. Positions 594-615 are cleaved as a propeptide — removed in mature form; sequence SEQLSPLLLPLLPLVAGEVFSY.

This sequence belongs to the peptidase M10A family. Requires Zn(2+) as cofactor. Ca(2+) is required as a cofactor. The precursor is cleaved by a furin endopeptidase.

It is found in the cell membrane. Its function is as follows. May activate progelatinase A. This chain is Matrix metalloproteinase-25 (Mmp25), found in Mus musculus (Mouse).